The sequence spans 457 residues: Casein kinase 1-like protein 11 (457 aa).

The 270-residue stretch at 15-284 (FKLGRKLGSG…LRRLFRDLFI (270 aa)) folds into the Protein kinase domain. Residues 21–29 (LGSGSFGEL) and Lys44 contribute to the ATP site. Asp134 functions as the Proton acceptor in the catalytic mechanism. Disordered stretches follow at residues 305–337 (GSSS…GQDL) and 352–442 (NVSS…EDAI). Pro residues predominate over residues 311–324 (RPTPRPALDPPGPP). Polar residues-rich tracts occupy residues 383-403 (NGST…SAEP) and 409-429 (SRLF…QSYE).

It belongs to the protein kinase superfamily. CK1 Ser/Thr protein kinase family. Casein kinase I subfamily. In terms of assembly, monomer. In terms of processing, autophosphorylated.

The protein localises to the cytoplasm. It is found in the nucleus. It catalyses the reaction L-seryl-[protein] + ATP = O-phospho-L-seryl-[protein] + ADP + H(+). The enzyme catalyses L-threonyl-[protein] + ATP = O-phospho-L-threonyl-[protein] + ADP + H(+). With respect to regulation, partially inhibited by N-(2-aminoethyl)-5-chloroisoquinoline-8-sulfonamide (CKI-7). Casein kinases are operationally defined by their preferential utilization of acidic proteins such as caseins as substrates. Can phosphorylate casein, phosvitin, myosin light chains and poly(Glu,Tyr) in vitro. The polypeptide is Casein kinase 1-like protein 11 (Arabidopsis thaliana (Mouse-ear cress)).